The sequence spans 762 residues: Polyribonucleotide nucleotidyltransferase (762 aa).

Mg(2+) is bound by residues aspartate 531 and aspartate 537. One can recognise a KH domain in the interval 597–656 (PRVTTIKVPVDKIGEVIGPKGKVINSITEETRAQISIEDDGTVFVGATDGPSAQAAIDKI). One can recognise an S1 motif domain in the interval 668-737 (GERFLGTVVK…KRGKISLVLV (70 aa)).

It belongs to the polyribonucleotide nucleotidyltransferase family. Requires Mg(2+) as cofactor.

The protein localises to the cytoplasm. It carries out the reaction RNA(n+1) + phosphate = RNA(n) + a ribonucleoside 5'-diphosphate. In terms of biological role, involved in mRNA degradation. Catalyzes the phosphorolysis of single-stranded polyribonucleotides processively in the 3'- to 5'-direction. In Mycobacterium ulcerans (strain Agy99), this protein is Polyribonucleotide nucleotidyltransferase.